The following is a 427-amino-acid chain: MKIKTISGAERLSLKRSIDAGTEEQRKTVRSIIEDVKANGDQAVRSYTAKFDCIEIDSPLVTKEEFEEAYTSLDSRLLQVIRQAIENIREYHERQLQSSWFYHRKDGTMLGQKVTALDSAGVYVPGGTAAYPSSVLMNVIPALVAGVERIVLVTPPGKDGLLSPGVLVAAAELGIKDIYKMGGAQAIAALAYGTETIEPVDKITGPGNIYVALAKREVFGDVDIDMIAGPSEIVVLADETAIPSEIAADLLSQAEHDKLSSCVFVTDSMALAETVSAEVNKQLETLPRREIAEASVRDYGCIYVAETMVEAIETVNTLAPEHLEIITQSPEALLGSIKHAGAIFLGRYSPEPVGDYFAGPNHVLPTNGTARFSSPLNVTDFQKKSSIISYSQSAFEEHAESIAAFARLEGLEAHARSIEARERRISK.

NAD(+) contacts are provided by tyrosine 123, glutamine 185, and asparagine 208. Substrate-binding residues include serine 231, glutamine 253, and histidine 256. Residues glutamine 253 and histidine 256 each contribute to the Zn(2+) site. Active-site proton acceptor residues include glutamate 321 and histidine 322. Histidine 322, aspartate 355, glutamate 409, and histidine 414 together coordinate substrate. Aspartate 355 contacts Zn(2+). Histidine 414 provides a ligand contact to Zn(2+).

This sequence belongs to the histidinol dehydrogenase family. Zn(2+) is required as a cofactor.

It carries out the reaction L-histidinol + 2 NAD(+) + H2O = L-histidine + 2 NADH + 3 H(+). It functions in the pathway amino-acid biosynthesis; L-histidine biosynthesis; L-histidine from 5-phospho-alpha-D-ribose 1-diphosphate: step 9/9. In terms of biological role, catalyzes the sequential NAD-dependent oxidations of L-histidinol to L-histidinaldehyde and then to L-histidine. This chain is Histidinol dehydrogenase (hisD), found in Bacillus subtilis (strain 168).